The chain runs to 435 residues: Ras association domain-containing protein 9 (435 aa).

A disordered region spans residues 1-22 (MAPFGRNLLKTRHKNRSPTKDM). One can recognise a Ras-associating domain in the interval 25-119 (EEKEIVVWVC…MQFVLVKADA (95 aa)). The stretch at 195–290 (HTIHQQVKRM…DKLSAEIEKE (96 aa)) forms a coiled coil. The tract at residues 380 to 435 (NRAKESEVPSSNGEIPPFTQRVFSNYTNDTDSDTGISSNHSQDSETTVGDVVLLST) is disordered. Polar residues predominate over residues 400-426 (RVFSNYTNDTDSDTGISSNHSQDSETT).

Interacts with PAM.

The protein localises to the endosome. May play a role in regulating vesicuar trafficking in cells. The sequence is that of Ras association domain-containing protein 9 (RASSF9) from Homo sapiens (Human).